We begin with the raw amino-acid sequence, 186 residues long: MKVSKYVAIFFFVFIQLISVGKVFANADEWMTTFRENIAQTWQQPEHYDLYIPAITWHARFAYDKEKTDRYNERPWGGGFGQSRWDEKGNWHGLYAMAFKDSWNKWEPIAGYGWESTWRPLADENFHLGLGFTAGVTARDNWNYIPLPVLLPLASVGYGPATFQMTYIPGTYNNGNVYFAWMRFQF.

Residues 1 to 25 (MKVSKYVAIFFFVFIQLISVGKVFA) form the signal peptide. Active-site residues include histidine 58, aspartate 101, and serine 102.

Belongs to the lipid A palmitoyltransferase family. Homodimer.

Its subcellular location is the cell outer membrane. The catalysed reaction is lipid A (E. coli) + a 1-hexadecanoyl-2-acyl-sn-glycero-3-phosphocholine = hepta-acyl lipid A (E. coli) + a 2-acyl-sn-glycero-3-phosphocholine. The enzyme catalyses lipid IIA + a 1-hexadecanoyl-2-acyl-sn-glycero-3-phosphocholine = lipid IIB + a 2-acyl-sn-glycero-3-phosphocholine. It carries out the reaction lipid IVA (E. coli) + a 1-hexadecanoyl-2-acyl-sn-glycero-3-phosphocholine = lipid IVB (E. coli) + a 2-acyl-sn-glycero-3-phosphocholine. Its function is as follows. Transfers a palmitate residue from the sn-1 position of a phospholipid to the N-linked hydroxymyristate on the proximal unit of lipid A or its precursors. This Escherichia coli O6:K15:H31 (strain 536 / UPEC) protein is Lipid A palmitoyltransferase PagP.